We begin with the raw amino-acid sequence, 388 residues long: MKTNNHNAKQAQTKTAKSNPSKEVTKIKPKRVKNKPTAKAAKSTGLKTNAANESSDVEVIKTAKSGLHERNAHRGRYDFKKLIAAEPQLKSFVIKNPKGEDSINFSDPKAVKMLNKALLAAHYDIEYWDIPDTYLCPPIPGRADYVHRVAELLDGEVKGKYAHHKVRALDVGVGANCIYPIVGVTQYGWHYTGSDVDPKSIESARTIVERNVSLNGKIELRQQTSESNIYRGIIQPNDRYDITTCNPPFHRSAEEAAMGSQRKLDNLKANQRKKGVKVQAHQAKTPQVKANKPALNFGGQNAELWCEGGEAAFIRKMANESQAFSAQVLWFTTLISKKDNVRPMRKQLEKLGVKAIRIVEMSQGQKVSRFMAWSYMDKAQRKAWIELK.

The span at 1–22 shows a compositional bias: polar residues; it reads MKTNNHNAKQAQTKTAKSNPSK. The interval 1–51 is disordered; sequence MKTNNHNAKQAQTKTAKSNPSKEVTKIKPKRVKNKPTAKAAKSTGLKTNAA. Over residues 27-36 the composition is skewed to basic residues; it reads IKPKRVKNKP.

This sequence belongs to the methyltransferase superfamily. METTL16/RlmF family.

It is found in the cytoplasm. The catalysed reaction is adenosine(1618) in 23S rRNA + S-adenosyl-L-methionine = N(6)-methyladenosine(1618) in 23S rRNA + S-adenosyl-L-homocysteine + H(+). Functionally, specifically methylates the adenine in position 1618 of 23S rRNA. The polypeptide is Ribosomal RNA large subunit methyltransferase F (Vibrio campbellii (strain ATCC BAA-1116)).